Here is a 301-residue protein sequence, read N- to C-terminus: MYHTPVLLKEMLDILSPQNGGIYVDATFGSGGYSRAILNSADCQVYAIDQDEYTYTFYEKLSHDFPNRIHFFINKFSKIQQILNNVQIKKVDGVVFDIGVSSMQLEDASRGFSFSKNGPLDMRMSTSLSGVDARMFVNTVSEVEIANVIYQYGGEKYSRKIARAIVNARNKNMINTTGELASIIRSVVSRSKNHSIDPATRTFQAIRIWVNKELEELEKGIACAANILNQGGKIIVISFHSLEDRIVKVMFKLLCDGKSVNLLNLGLGFQLINKKIIRPTAEEIHSNPRARSAKLRAILKL.

S-adenosyl-L-methionine-binding positions include 31–33 (GGY), Asp-49, Phe-76, Asp-97, and Gln-104.

The protein belongs to the methyltransferase superfamily. RsmH family.

The protein localises to the cytoplasm. It carries out the reaction cytidine(1402) in 16S rRNA + S-adenosyl-L-methionine = N(4)-methylcytidine(1402) in 16S rRNA + S-adenosyl-L-homocysteine + H(+). In terms of biological role, specifically methylates the N4 position of cytidine in position 1402 (C1402) of 16S rRNA. The polypeptide is Ribosomal RNA small subunit methyltransferase H (Ehrlichia ruminantium (strain Gardel)).